The chain runs to 271 residues: Aquaporin-11 (271 aa).

Residues 1–14 (MSALLGLPPEVQDT) are Cytoplasmic-facing. A helical membrane pass occupies residues 15-35 (CISLGLMLLVVLFMGLARVIA). At 36–41 (RQQLHR) the chain is on the lumenal side. The helical transmembrane segment at 42–62 (PMVHAFVLEFLATFQLCYCTH) threads the bilayer. Topologically, residues 63 to 76 (ELQLLSEQDSGHPT) are cytoplasmic. The chain crosses the membrane as a helical span at residues 77–97 (WTLTLIYFFSLVHGLTLVGTA). Topologically, residues 98–166 (SNPCGVMMQM…NPINTDISKA (69 aa)) are lumenal. Positions 99–101 (NPC) match the NPC motif. The chain crosses the membrane as a helical span at residues 167 to 187 (IIIEAICSFIFHSALLHFQEV). The Cytoplasmic segment spans residues 188–194 (RTKLRIH). Residues 195-215 (VLAALITFLAYAGGSLTGALF) form a helical membrane-spanning segment. An NPA motif is present at residues 216–218 (NPA). Topologically, residues 216–234 (NPALALSLHFPCFDESFYK) are lumenal. Residues 235–255 (FFVVYWVAPSLGVLLMILMFS) form a helical membrane-spanning segment. At 256–271 (FFLPWLHNNQLSNKKE) the chain is on the cytoplasmic side.

This sequence belongs to the MIP/aquaporin (TC 1.A.8) family. AQP11/AQP12 subfamily. As to quaternary structure, homodimer; disulfide-linked. Homotetramer. Can also form homomultimer. In terms of processing, not glycosylated. In terms of tissue distribution, expressed in retina specifically at retinal Mueller glial cells. Expressed in adult testis, in the elongated spermatids (ES) and in residual bodies inside Sertoli cells.

Its subcellular location is the endoplasmic reticulum membrane. The protein localises to the cytoplasmic vesicle membrane. It localises to the cell membrane. It carries out the reaction H2O(in) = H2O(out). It catalyses the reaction glycerol(in) = glycerol(out). The catalysed reaction is H2O2(out) = H2O2(in). In terms of biological role, channel protein that facilitates the transport of water, glycerol and hydrogen peroxide across membrane of cell or organelles guaranteeing intracellular homeostasis in several organes like liver, kidney and brain. In situation of stress, participates in endoplasmic reticulum (ER) homeostasis by regulating redox homeostasis through the transport of hydrogen peroxide across the endoplasmic reticulum membrane thereby regulating the oxidative stress through the NADPH oxidase 2 pathway. Plays a role by maintaining an environment suitable for translation or protein foldings in the ER lumen namely by participating in the PKD1 glycosylation processing resulting in regulation of PKD1 membrane trafficking thereby preventing the accumulation of unfolding protein in ER. Plays a role in the proximal tubule function by regulating its endosomal acidification. May play a role in postnatal kidney development. This chain is Aquaporin-11, found in Rattus norvegicus (Rat).